A 559-amino-acid chain; its full sequence is Small ribosomal subunit protein bS1 (559 aa).

S1 motif domains are found at residues 21–87 (GAII…LSRE), 105–171 (DEVV…VSRR), 192–260 (GQQV…LGLK), 277–347 (GTRV…LGIK), 364–434 (GDRI…LGIK), and 451–520 (GSIV…LSVK).

The protein belongs to the bacterial ribosomal protein bS1 family.

In terms of biological role, binds mRNA; thus facilitating recognition of the initiation point. It is needed to translate mRNA with a short Shine-Dalgarno (SD) purine-rich sequence. This is Small ribosomal subunit protein bS1 (rpsA) from Pseudomonas aeruginosa (strain ATCC 15692 / DSM 22644 / CIP 104116 / JCM 14847 / LMG 12228 / 1C / PRS 101 / PAO1).